A 371-amino-acid chain; its full sequence is tRNA-specific 2-thiouridylase MnmA (371 aa).

ATP-binding positions include 13-20 (GMSGGVDS) and methionine 39. The tract at residues 99–101 (NPD) is interaction with target base in tRNA. The active-site Nucleophile is the cysteine 104. Cysteine 104 and cysteine 200 are joined by a disulfide. Glycine 128 serves as a coordination point for ATP. The interval 150–152 (KDQ) is interaction with tRNA. The active-site Cysteine persulfide intermediate is the cysteine 200. The interval 308–309 (RY) is interaction with tRNA.

The protein belongs to the MnmA/TRMU family.

Its subcellular location is the cytoplasm. It catalyses the reaction S-sulfanyl-L-cysteinyl-[protein] + uridine(34) in tRNA + AH2 + ATP = 2-thiouridine(34) in tRNA + L-cysteinyl-[protein] + A + AMP + diphosphate + H(+). Functionally, catalyzes the 2-thiolation of uridine at the wobble position (U34) of tRNA, leading to the formation of s(2)U34. The protein is tRNA-specific 2-thiouridylase MnmA of Listeria monocytogenes serotype 4b (strain CLIP80459).